We begin with the raw amino-acid sequence, 166 residues long: Small ribosomal subunit protein uS5 (166 aa).

Residues 11–74 form the S5 DRBM domain; the sequence is LQEKLIAVNR…EKARRNMKTV (64 aa).

The protein belongs to the universal ribosomal protein uS5 family. As to quaternary structure, part of the 30S ribosomal subunit. Contacts proteins S4 and S8.

Its function is as follows. With S4 and S12 plays an important role in translational accuracy. Located at the back of the 30S subunit body where it stabilizes the conformation of the head with respect to the body. This chain is Small ribosomal subunit protein uS5, found in Photorhabdus laumondii subsp. laumondii (strain DSM 15139 / CIP 105565 / TT01) (Photorhabdus luminescens subsp. laumondii).